The chain runs to 468 residues: Replication factor C large subunit (468 aa).

50–57 contributes to the ATP binding site; it reads GPPGSGKT. The interval 422-456 is disordered; it reads EEKAVEEKVEEEEAEEEEEEERKEEEKPKAEKKKG. Over residues 429 to 444 the composition is skewed to acidic residues; it reads KVEEEEAEEEEEEERK.

Belongs to the activator 1 small subunits family. RfcL subfamily. As to quaternary structure, heteromultimer composed of small subunits (RfcS) and large subunits (RfcL).

In terms of biological role, part of the RFC clamp loader complex which loads the PCNA sliding clamp onto DNA. The polypeptide is Replication factor C large subunit (Pyrococcus horikoshii (strain ATCC 700860 / DSM 12428 / JCM 9974 / NBRC 100139 / OT-3)).